Reading from the N-terminus, the 346-residue chain is Protein RecA (346 aa).

67–74 (GPESSGKT) is a binding site for ATP.

This sequence belongs to the RecA family.

The protein localises to the cytoplasm. Can catalyze the hydrolysis of ATP in the presence of single-stranded DNA, the ATP-dependent uptake of single-stranded DNA by duplex DNA, and the ATP-dependent hybridization of homologous single-stranded DNAs. It interacts with LexA causing its activation and leading to its autocatalytic cleavage. The sequence is that of Protein RecA from Mycobacteroides abscessus (strain ATCC 19977 / DSM 44196 / CCUG 20993 / CIP 104536 / JCM 13569 / NCTC 13031 / TMC 1543 / L948) (Mycobacterium abscessus).